The following is a 592-amino-acid chain: MYRQDHVFVVLCAVLLAGQVTAVPAGTGINPHSPPLGPFESVRFASQTQSQIASSRGPFTWLRDTVIERIWGIDKKHSNKVGSQPRPEKSWSRYGSDIVLRMEVHSTEEVEALADAVNILFLDVWDSNENYVDIRMAKEVVPSLLGLLPQSLQKSHTLLIEDLSKAIYESRYPTRDYQRHTIDQTDCHTVPRPLDVADLFFDHYQPFNVILQWMRLIVSMFPSHAQLVNVGVTHEGRDIPAFRLGVRSRDDEQEGPRKTIMIVGGSHAREWISTSTVAYIAFQLVTEFGNSVAITKLLEDFDWVLVPTINPDGYVYSWDMDRLWRKNRQPTGLPFCPGIDLDRSWGYEWDGQGTRANPCSESYAGNNPFDSIETRTIAEWAYNQTQDKRTDFIGFLDLHSYSQQILYPYSYSCSTVPPTLENLEELAFGIAKAIRMTNQEAYAVKSACEGVVTTDKGNGQRVSANVESTGGSALDWFYHQLHAKYSYQIKLRDKGMYGFLLPPEHIVPTGREIFNSVLVLGHFLLGEDANALEWEFIPGSKSTSEQENGSSRTFDRLFFNMNEDELEKPGNDRDYSSVVEEDVYQDEGWGLW.

A signal peptide spans 1-22; sequence MYRQDHVFVVLCAVLLAGQVTA. Residues 23-175 constitute a propeptide that is removed on maturation; it reads VPAGTGINPH…AIYESRYPTR (153 aa). Residues 203-524 enclose the Peptidase M14 domain; the sequence is HYQPFNVILQ…NSVLVLGHFL (322 aa). Zn(2+) contacts are provided by His-267 and Glu-270. Substrate contacts are provided by residues 267–270, Arg-325, and 342–343; these read HARE and DR. A disulfide bond links Cys-336 and Cys-359. Residue Asn-383 is glycosylated (N-linked (GlcNAc...) asparagine). Zn(2+) is bound at residue His-399. 400 to 401 is a substrate binding site; that stretch reads SY. An N-linked (GlcNAc...) asparagine glycan is attached at Asn-548.

This sequence belongs to the peptidase M14 family. It depends on Zn(2+) as a cofactor.

The protein localises to the vacuole. Its subcellular location is the secreted. Inactive carboxypeptidase that may play a role in cell wall organization and biogenesis. In Talaromyces stipitatus (strain ATCC 10500 / CBS 375.48 / QM 6759 / NRRL 1006) (Penicillium stipitatum), this protein is Inactive metallocarboxypeptidase ecm14 (ecm14).